Reading from the N-terminus, the 144-residue chain is MTKPQKDELKKKLTPIQYFVTQENGTEPPFQNEYYETEEEGIYVDVVSGKPLFSSKDKYDAGCGWPSFTKPIDEAEIIEKEDRSHFMVRTEVRSKNADSHLGHVFPDGPGPNGLRYCINSAALRFIPKAKLKEAGYGAYEKLFD.

The 123-residue stretch at 6-128 (KDELKKKLTP…NSAALRFIPK (123 aa)) folds into the MsrB domain. The active-site Nucleophile is the Cys-117.

It belongs to the MsrB Met sulfoxide reductase family.

It catalyses the reaction L-methionyl-[protein] + [thioredoxin]-disulfide + H2O = L-methionyl-(R)-S-oxide-[protein] + [thioredoxin]-dithiol. This Shouchella clausii (strain KSM-K16) (Alkalihalobacillus clausii) protein is Peptide methionine sulfoxide reductase MsrB.